Reading from the N-terminus, the 52-residue chain is Ovomucoid (52 aa).

A Kazal-like domain is found at 2-52; that stretch reads VDCSEYPKPACPKDYRPVCGSDNKTYGNKCNFCNAVVESNGTLTLNRFGKC. Disulfide bonds link C4–C34, C12–C31, and C20–C52. An N-linked (GlcNAc...) asparagine glycan is attached at N41.

The protein localises to the secreted. The polypeptide is Ovomucoid (Coturnix delegorguei (Harlequin quail)).